A 131-amino-acid chain; its full sequence is NADPH-dependent 7-cyano-7-deazaguanine reductase (131 aa).

Catalysis depends on Cys-48, which acts as the Thioimide intermediate. The Proton donor role is filled by Asp-55. Residues 70–72 and 89–90 each bind substrate; these read VEL and QE.

This sequence belongs to the GTP cyclohydrolase I family. QueF type 1 subfamily.

It localises to the cytoplasm. The enzyme catalyses 7-aminomethyl-7-carbaguanine + 2 NADP(+) = 7-cyano-7-deazaguanine + 2 NADPH + 3 H(+). It participates in tRNA modification; tRNA-queuosine biosynthesis. In terms of biological role, catalyzes the NADPH-dependent reduction of 7-cyano-7-deazaguanine (preQ0) to 7-aminomethyl-7-deazaguanine (preQ1). This Caldicellulosiruptor bescii (strain ATCC BAA-1888 / DSM 6725 / KCTC 15123 / Z-1320) (Anaerocellum thermophilum) protein is NADPH-dependent 7-cyano-7-deazaguanine reductase.